The sequence spans 122 residues: Prefoldin subunit 1 (122 aa).

Residue A2 is modified to N-acetylalanine.

The protein belongs to the prefoldin subunit beta family. In terms of assembly, heterohexamer of two PFD-alpha type and four PFD-beta type subunits.

Binds specifically to cytosolic chaperonin (c-CPN) and transfers target proteins to it. Binds to nascent polypeptide chain and promotes folding in an environment in which there are many competing pathways for nonnative proteins. This Mus musculus (Mouse) protein is Prefoldin subunit 1 (Pfdn1).